A 599-amino-acid polypeptide reads, in one-letter code: Proline--tRNA ligase (599 aa).

It belongs to the class-II aminoacyl-tRNA synthetase family. ProS type 1 subfamily. As to quaternary structure, homodimer.

It is found in the cytoplasm. It carries out the reaction tRNA(Pro) + L-proline + ATP = L-prolyl-tRNA(Pro) + AMP + diphosphate. Its function is as follows. Catalyzes the attachment of proline to tRNA(Pro) in a two-step reaction: proline is first activated by ATP to form Pro-AMP and then transferred to the acceptor end of tRNA(Pro). As ProRS can inadvertently accommodate and process non-cognate amino acids such as alanine and cysteine, to avoid such errors it has two additional distinct editing activities against alanine. One activity is designated as 'pretransfer' editing and involves the tRNA(Pro)-independent hydrolysis of activated Ala-AMP. The other activity is designated 'posttransfer' editing and involves deacylation of mischarged Ala-tRNA(Pro). The misacylated Cys-tRNA(Pro) is not edited by ProRS. The protein is Proline--tRNA ligase of Prochlorococcus marinus (strain MIT 9303).